Consider the following 920-residue polypeptide: Protein FAN (920 aa).

A GRAM domain is found at 176-247 (RLARTSFDKN…QDVRRIYKRR (72 aa)). Residues 189–286 (SVSEKLHMEC…DRDDLYFYIA (98 aa)) enclose the BEACH-type PH domain. The region spanning 290 to 575 (EHHAAEHTAE…QLFVTPHPRR (286 aa)) is the BEACH domain. WD repeat units lie at residues 631 to 661 (IHKEAVTGIAVSCNGSSVFTTSQDSTLKMFS), 673 to 703 (FSNMALSSCLLLPGDTTVISSSWDNNVYFYS), 715 to 743 (GHDDAVSKICWHNDRLYSGSWDSTVKVWS), 764 to 794 (EHDVSVNTINLNAVSTLLVSGTKEGMVNIWD), 806 to 836 (CHSGTVCDAAFSPDSRHILSTGVDGCLNVID), and 887 to 917 (GHTGAVTCMWMNEQCSSIITGGEDRQIMFWK).

Its function is as follows. Couples the p55 TNF-receptor (TNF-R55 / TNFR1) to neutral sphingomyelinase (N-SMASE). Specifically binds to the N-smase activation domain of TNF-R55. May regulate ceramide production by N-SMASE. This chain is Protein FAN (Nsmaf), found in Mus musculus (Mouse).